We begin with the raw amino-acid sequence, 469 residues long: Exodeoxyribonuclease 7 large subunit (469 aa).

Belongs to the XseA family. Heterooligomer composed of large and small subunits.

The protein resides in the cytoplasm. The catalysed reaction is Exonucleolytic cleavage in either 5'- to 3'- or 3'- to 5'-direction to yield nucleoside 5'-phosphates.. In terms of biological role, bidirectionally degrades single-stranded DNA into large acid-insoluble oligonucleotides, which are then degraded further into small acid-soluble oligonucleotides. This chain is Exodeoxyribonuclease 7 large subunit, found in Mycoplasma mycoides subsp. mycoides SC (strain CCUG 32753 / NCTC 10114 / PG1).